The primary structure comprises 114 residues: Small ribosomal subunit protein bS16 (114 aa).

Belongs to the bacterial ribosomal protein bS16 family.

This is Small ribosomal subunit protein bS16 from Prochlorococcus marinus subsp. pastoris (strain CCMP1986 / NIES-2087 / MED4).